A 360-amino-acid polypeptide reads, in one-letter code: Probable L-asparaginase 3 (360 aa).

An N-terminal signal peptide occupies residues 1 to 16; sequence MWSSIISFLFFSVALC. N-linked (GlcNAc...) asparagine glycans are attached at residues asparagine 27, asparagine 35, and asparagine 40. Residues 39 to 359 form the Asparaginase/glutaminase domain; that stretch reads PNVTIFAMGG…QNITDIFSLE (321 aa). The O-isoaspartyl threonine intermediate role is filled by threonine 49. Asparagine 82 is a glycosylation site (N-linked (GlcNAc...) asparagine). Residue serine 96 participates in substrate binding. Asparagine 106 is a glycosylation site (N-linked (GlcNAc...) asparagine). 129–130 is a binding site for substrate; that stretch reads TD. Residues asparagine 144, asparagine 179, asparagine 246, asparagine 302, and asparagine 351 are each glycosylated (N-linked (GlcNAc...) asparagine).

The protein belongs to the asparaginase 1 family.

It localises to the secreted. The protein resides in the cell wall. It catalyses the reaction L-asparagine + H2O = L-aspartate + NH4(+). In Schizosaccharomyces pombe (strain 972 / ATCC 24843) (Fission yeast), this protein is Probable L-asparaginase 3.